Reading from the N-terminus, the 226-residue chain is Leucyl/phenylalanyl-tRNA--protein transferase (226 aa).

The protein belongs to the L/F-transferase family.

Its subcellular location is the cytoplasm. The catalysed reaction is N-terminal L-lysyl-[protein] + L-leucyl-tRNA(Leu) = N-terminal L-leucyl-L-lysyl-[protein] + tRNA(Leu) + H(+). The enzyme catalyses N-terminal L-arginyl-[protein] + L-leucyl-tRNA(Leu) = N-terminal L-leucyl-L-arginyl-[protein] + tRNA(Leu) + H(+). It carries out the reaction L-phenylalanyl-tRNA(Phe) + an N-terminal L-alpha-aminoacyl-[protein] = an N-terminal L-phenylalanyl-L-alpha-aminoacyl-[protein] + tRNA(Phe). Functions in the N-end rule pathway of protein degradation where it conjugates Leu, Phe and, less efficiently, Met from aminoacyl-tRNAs to the N-termini of proteins containing an N-terminal arginine or lysine. This Pseudomonas entomophila (strain L48) protein is Leucyl/phenylalanyl-tRNA--protein transferase.